The sequence spans 273 residues: Urease accessory protein UreD (273 aa).

Belongs to the UreD family. UreD, UreF and UreG form a complex that acts as a GTP-hydrolysis-dependent molecular chaperone, activating the urease apoprotein by helping to assemble the nickel containing metallocenter of UreC. The UreE protein probably delivers the nickel.

It localises to the cytoplasm. In terms of biological role, required for maturation of urease via the functional incorporation of the urease nickel metallocenter. The polypeptide is Urease accessory protein UreD (Mycolicibacterium gilvum (strain PYR-GCK) (Mycobacterium gilvum (strain PYR-GCK))).